We begin with the raw amino-acid sequence, 269 residues long: Indole-3-glycerol phosphate synthase (269 aa).

It belongs to the TrpC family.

It catalyses the reaction 1-(2-carboxyphenylamino)-1-deoxy-D-ribulose 5-phosphate + H(+) = (1S,2R)-1-C-(indol-3-yl)glycerol 3-phosphate + CO2 + H2O. The protein operates within amino-acid biosynthesis; L-tryptophan biosynthesis; L-tryptophan from chorismate: step 4/5. This Streptomyces griseus subsp. griseus (strain JCM 4626 / CBS 651.72 / NBRC 13350 / KCC S-0626 / ISP 5235) protein is Indole-3-glycerol phosphate synthase.